The sequence spans 294 residues: Antiviral protein alpha (294 aa).

Residues Met-1 to Ala-24 form the signal peptide. Cystine bridges form between Cys-58-Cys-282 and Cys-108-Cys-130. Residue Glu-199 is part of the active site. Residues Tyr-286 to Leu-294 constitute a propeptide that is removed on maturation.

The protein belongs to the ribosome-inactivating protein family. Type 1 RIP subfamily. In terms of assembly, monomer.

It localises to the secreted. Its subcellular location is the cell wall. It carries out the reaction Endohydrolysis of the N-glycosidic bond at one specific adenosine on the 28S rRNA.. In terms of biological role, inhibits viral infection of plants, and protein synthesis in vitro. Has also been shown to inhibit the replication of mammalian viruses. The protein may provide a means of cellular suicide upon invasion by a virus. The protein is Antiviral protein alpha of Phytolacca americana (American pokeweed).